The primary structure comprises 328 residues: Nucleotide-binding protein BLD_0430 (328 aa).

The segment at 1 to 35 (MNQQTTNRDTGEAAATNAPANSATSTSTPDNQPTP) is disordered. A compositionally biased stretch (low complexity) spans 13-29 (AAATNAPANSATSTSTP). 46-53 (GMSGAGRS) is an ATP binding site. Residue 101 to 104 (DVRS) participates in GTP binding.

It belongs to the RapZ-like family.

Displays ATPase and GTPase activities. This Bifidobacterium longum (strain DJO10A) protein is Nucleotide-binding protein BLD_0430.